The primary structure comprises 305 residues: Undecaprenyl-diphosphatase (305 aa).

The next 8 membrane-spanning stretches (helical) occupy residues 18–38 (GVTE…PALV), 55–75 (YLAF…VFFW), 103–123 (WLIV…EQLF), 130–150 (PVPA…GEVL), 187–207 (GVLI…RSGI), 225–245 (FSFL…IPEL), 246–266 (FGPL…ASFV), and 284–304 (LTPF…WLAL).

Belongs to the UppP family.

It is found in the cell membrane. The enzyme catalyses di-trans,octa-cis-undecaprenyl diphosphate + H2O = di-trans,octa-cis-undecaprenyl phosphate + phosphate + H(+). Its function is as follows. Catalyzes the dephosphorylation of undecaprenyl diphosphate (UPP). Confers resistance to bacitracin. This is Undecaprenyl-diphosphatase from Mycobacterium avium (strain 104).